Here is a 242-residue protein sequence, read N- to C-terminus: 1-(5-phosphoribosyl)-5-[(5-phosphoribosylamino)methylideneamino] imidazole-4-carboxamide isomerase (242 aa).

Residue Asp-8 is the Proton acceptor of the active site. Residue Asp-130 is the Proton donor of the active site.

The protein belongs to the HisA/HisF family.

It is found in the cytoplasm. The enzyme catalyses 1-(5-phospho-beta-D-ribosyl)-5-[(5-phospho-beta-D-ribosylamino)methylideneamino]imidazole-4-carboxamide = 5-[(5-phospho-1-deoxy-D-ribulos-1-ylimino)methylamino]-1-(5-phospho-beta-D-ribosyl)imidazole-4-carboxamide. It functions in the pathway amino-acid biosynthesis; L-histidine biosynthesis; L-histidine from 5-phospho-alpha-D-ribose 1-diphosphate: step 4/9. The protein is 1-(5-phosphoribosyl)-5-[(5-phosphoribosylamino)methylideneamino] imidazole-4-carboxamide isomerase of Thioalkalivibrio sulfidiphilus (strain HL-EbGR7).